The sequence spans 884 residues: MSELLFRLNFLLLLLLSCVSLASSFFSFNDPVVGLGACGPHQIQAFTQFKNEFDTHACNHSDSLNGVWCDNSTGAVMKLRLRACLSGTLKSNSSLFQFHQLRHLYLSYNNFTPSSIPSEFGMLNKLEVLFMSTGGFLGQVPSSFSNLSMLSALLLHHNELTGSLSFVRNLRKLTILDVSHNHFSGTLNPNSSLFELHNLAYLDLGSNNFTSSSLPYEFGNLNKLELLDVSSNSFFGQVPPTISNLTQLTELYLPLNDFTGSLPLVQNLTKLSILHLSDNHFSGTIPSSLFTMPFLSYLDLGGNNLSGSIEVPNSSLSSRLENLNLGENHFEGKIIEPISKLINLKELHLSFLNTSYPINLKLFSSLKYLLLLDLSGGWISQASLSLDSYIPSTLEALLLKHCNISVFPNILKTLPNLEFIALSTNKISGKIPEWLWSLPRLSSVFIEENLFTGFEGSSEILVNSSVRILNLLSNNLEGALPHLPLSVNYFSARNNRYGGDIPLSICSRRSLVFLDLSYNNFTGPIPPCPSNFLILNLRKNNLEGSIPDTYYADAPLRSLDVGYNRLTGKLPRSLLNCSALQFLSVDHNGIKDTFPFSLKALPKLQVLILHSNNFYGPLSPPNQGSLGFPELRILEIAGNKFTGSLPPDFFENWKASSLTMNEDQGLYMVYNKVVYGTYYFTSLEAIDLQYKGLSMEQNRVLSSSATIDFSGNRLEGEIPESIGLLKALIALNLSNNAFTGHIPLSLANLKKIESLDLSSNQLSGTIPNGIGTLSFLAYMNVSHNQLNGEIPQGTQITGQPKSSFEGNAGLCGLPLQESCFGTNAPPAQHPKEEEEEEEEEEQVLNWKGVGIGYGVGVLLGLAIAQLIASYKPEWLVFLFQSRNH.

An N-terminal signal peptide occupies residues 1-24 (MSELLFRLNFLLLLLLSCVSLASS). Residues 25 to 847 (FFSFNDPVVG…EEEEQVLNWK (823 aa)) are Extracellular-facing. Asparagine 59, asparagine 71, and asparagine 92 each carry an N-linked (GlcNAc...) asparagine glycan. 10 LRR repeats span residues 98-122 (FHQL…EFGM), 124-146 (NKLE…SFSN), 147-170 (LSML…VRNL), 171-196 (RKLT…LFEL), 197-223 (HNLA…NLNK), 225-245 (ELLD…ISNL), 246-268 (TQLT…VQNL), 269-292 (TKLS…LFTM), 294-318 (FLSY…SLSS), and 320-344 (LENL…LINL). Asparagine 146 carries an N-linked (GlcNAc...) asparagine glycan. N-linked (GlcNAc...) asparagine glycosylation is found at asparagine 190, asparagine 208, asparagine 244, and asparagine 267. Asparagine 304 and asparagine 313 each carry an N-linked (GlcNAc...) asparagine glycan. Residues 345-365 (KELHLSFLNTSYPINLKLFSS) form an LRR 11; degenerate repeat. N-linked (GlcNAc...) asparagine glycosylation is present at asparagine 353. LRR repeat units follow at residues 366–391 (LKYL…SYIP), 392–413 (STLE…ILKT), 414–438 (LPNL…LWSL), 440–463 (RLSS…ILVN), and 464–487 (SSVR…PLSV). N-linked (GlcNAc...) asparagine glycosylation is present at asparagine 403. An N-linked (GlcNAc...) asparagine glycan is attached at asparagine 463. The LRR 17; degenerate repeat unit spans residues 488 to 507 (NYFSARNNRYGGDIPLSICS). 10 LRR repeats span residues 508-529 (RRSL…PPCP), 530-553 (SNFL…YYAD), 554-577 (APLR…LLNC), 579-601 (ALQF…LKAL), 602-625 (PKLQ…NQGS), 628-652 (FPEL…FFEN), 702-725 (SSSA…IGLL), 726-749 (KALI…LANL), 750-773 (KKIE…IGTL), and 775-798 (FLAY…QITG). Asparagine 520 carries N-linked (GlcNAc...) asparagine glycosylation. Residue asparagine 576 is glycosylated (N-linked (GlcNAc...) asparagine). A glycan (N-linked (GlcNAc...) asparagine) is linked at asparagine 732. N-linked (GlcNAc...) asparagine glycosylation is present at asparagine 780. A helical transmembrane segment spans residues 848-868 (GVGIGYGVGVLLGLAIAQLIA). Residues 869–884 (SYKPEWLVFLFQSRNH) are Cytoplasmic-facing.

Belongs to the RLP family.

It localises to the cell membrane. This is Receptor-like protein 39 from Arabidopsis thaliana (Mouse-ear cress).